The primary structure comprises 132 residues: ATP synthase epsilon chain (132 aa).

This sequence belongs to the ATPase epsilon chain family. In terms of assembly, F-type ATPases have 2 components, CF(1) - the catalytic core - and CF(0) - the membrane proton channel. CF(1) has five subunits: alpha(3), beta(3), gamma(1), delta(1), epsilon(1). CF(0) has three main subunits: a, b and c.

Its subcellular location is the cell inner membrane. Produces ATP from ADP in the presence of a proton gradient across the membrane. This Jannaschia sp. (strain CCS1) protein is ATP synthase epsilon chain.